Reading from the N-terminus, the 130-residue chain is Small ribosomal subunit protein uS8 (130 aa).

Belongs to the universal ribosomal protein uS8 family. Part of the 30S ribosomal subunit. Contacts proteins S5 and S12.

Its function is as follows. One of the primary rRNA binding proteins, it binds directly to 16S rRNA central domain where it helps coordinate assembly of the platform of the 30S subunit. In Aliivibrio fischeri (strain ATCC 700601 / ES114) (Vibrio fischeri), this protein is Small ribosomal subunit protein uS8.